The following is a 122-amino-acid chain: Large ribosomal subunit protein uL14 (122 aa).

Belongs to the universal ribosomal protein uL14 family. Part of the 50S ribosomal subunit. Forms a cluster with proteins L3 and L19. In the 70S ribosome, L14 and L19 interact and together make contacts with the 16S rRNA in bridges B5 and B8.

In terms of biological role, binds to 23S rRNA. Forms part of two intersubunit bridges in the 70S ribosome. The chain is Large ribosomal subunit protein uL14 from Helicobacter acinonychis (strain Sheeba).